A 92-amino-acid chain; its full sequence is Large ribosomal subunit protein bL28 (92 aa).

The protein belongs to the bacterial ribosomal protein bL28 family.

The chain is Large ribosomal subunit protein bL28 from Borreliella burgdorferi (strain ATCC 35210 / DSM 4680 / CIP 102532 / B31) (Borrelia burgdorferi).